The primary structure comprises 565 residues: Phosphoenolpyruvate-protein phosphotransferase (565 aa).

H191 functions as the Tele-phosphohistidine intermediate in the catalytic mechanism. 2 residues coordinate phosphoenolpyruvate: R289 and R325. Residues E427 and D451 each contribute to the Mg(2+) site. Phosphoenolpyruvate contacts are provided by residues N450–D451 and R461. C498 acts as the Proton donor in catalysis.

Belongs to the PEP-utilizing enzyme family. Homodimer. Requires Mg(2+) as cofactor.

Its subcellular location is the cytoplasm. The catalysed reaction is L-histidyl-[protein] + phosphoenolpyruvate = N(pros)-phospho-L-histidyl-[protein] + pyruvate. General (non sugar-specific) component of the phosphoenolpyruvate-dependent sugar phosphotransferase system (sugar PTS). This major carbohydrate active-transport system catalyzes the phosphorylation of incoming sugar substrates concomitantly with their translocation across the cell membrane. Enzyme I transfers the phosphoryl group from phosphoenolpyruvate (PEP) to the phosphoryl carrier protein (HPr). The polypeptide is Phosphoenolpyruvate-protein phosphotransferase (ptsI) (Haloferax volcanii (strain ATCC 29605 / DSM 3757 / JCM 8879 / NBRC 14742 / NCIMB 2012 / VKM B-1768 / DS2) (Halobacterium volcanii)).